The chain runs to 561 residues: Membrane protein insertase YidC (561 aa).

The next 6 membrane-spanning stretches (helical) occupy residues Ile-7 to Tyr-27, Leu-342 to Leu-362, Leu-368 to Phe-388, Leu-438 to Leu-458, Trp-469 to Met-489, and Pro-516 to Val-536.

This sequence belongs to the OXA1/ALB3/YidC family. Type 1 subfamily. Interacts with the Sec translocase complex via SecD. Specifically interacts with transmembrane segments of nascent integral membrane proteins during membrane integration.

The protein resides in the cell inner membrane. In terms of biological role, required for the insertion and/or proper folding and/or complex formation of integral membrane proteins into the membrane. Involved in integration of membrane proteins that insert both dependently and independently of the Sec translocase complex, as well as at least some lipoproteins. Aids folding of multispanning membrane proteins. The chain is Membrane protein insertase YidC from Pseudomonas entomophila (strain L48).